The primary structure comprises 322 residues: Elongation factor P--(R)-beta-lysine ligase (322 aa).

Substrate is bound at residue 72–74 (SPE). ATP is bound by residues 96–98 (RNN) and asparagine 106. Tyrosine 115 is a substrate binding site. 241 to 242 (EL) serves as a coordination point for ATP. Residue glutamate 248 participates in substrate binding. Glycine 297 is an ATP binding site.

Belongs to the class-II aminoacyl-tRNA synthetase family. EpmA subfamily. As to quaternary structure, homodimer.

It carries out the reaction D-beta-lysine + L-lysyl-[protein] + ATP = N(6)-((3R)-3,6-diaminohexanoyl)-L-lysyl-[protein] + AMP + diphosphate + H(+). With EpmB is involved in the beta-lysylation step of the post-translational modification of translation elongation factor P (EF-P). Catalyzes the ATP-dependent activation of (R)-beta-lysine produced by EpmB, forming a lysyl-adenylate, from which the beta-lysyl moiety is then transferred to the epsilon-amino group of a conserved specific lysine residue in EF-P. In Buchnera aphidicola subsp. Baizongia pistaciae (strain Bp), this protein is Elongation factor P--(R)-beta-lysine ligase.